Here is a 417-residue protein sequence, read N- to C-terminus: Serine protease hepsin (417 aa).

The Cytoplasmic segment spans residues 1-23; that stretch reads MAQKEGGRTVPCCSRPKVAALTA. The chain crosses the membrane as a helical; Signal-anchor for type II membrane protein span at residues 24–44; sequence GTLLLLTAIGAASWAIVAVLL. Over 45-417 the chain is Extracellular; it reads RSDQEPLYPV…SEASGMVTQL (373 aa). The SRCR domain occupies 54-151; the sequence is VQVSSADARL…RGRFLAAICQ (98 aa). Cystine bridges form between C77–C140, C90–C150, C119–C138, C153–C277, C188–C204, C291–C359, C322–C338, and C349–C381. Residue N112 is glycosylated (N-linked (GlcNAc...) asparagine). The region spanning 163–405 is the Peptidase S1 domain; the sequence is IVGGRDTSLG…FREWIFQAIK (243 aa). Catalysis depends on charge relay system residues H203 and D257. The active-site Charge relay system is the S353.

Belongs to the peptidase S1 family. As to expression, detected in liver and kidney.

The protein resides in the cell membrane. It is found in the apical cell membrane. The enzyme catalyses Cleavage after basic amino-acid residues, with Arg strongly preferred to Lys.. Functionally, serine protease that cleaves extracellular substrates, and contributes to the proteolytic processing of growth factors, such as HGF and MST1/HGFL. Plays a role in cell growth and maintenance of cell morphology. Plays a role in the proteolytic processing of ACE2. Mediates the proteolytic cleavage of urinary UMOD that is required for UMOD polymerization. This is Serine protease hepsin (HPN) from Homo sapiens (Human).